The chain runs to 399 residues: Lovastatin esterase (399 aa).

S57 (nucleophile) is an active-site residue. Active-site proton acceptor residues include K60 and Y170.

Belongs to the class-A beta-lactamase family.

It catalyses the reaction lovastatin + H2O = monacolin J + (S)-2-methylbutanoate + H(+). It carries out the reaction pravastatin lactone + H2O = pravastatin diol lactone + (S)-2-methylbutanoate + H(+). The enzyme catalyses mevastatin + H2O = compactin diol lactone + (S)-2-methylbutanoate + H(+). In terms of biological role, esterase that can hydrolyze the side chain of lovastatin to produce monacolin J. Is also able to hydrolyze the side chains of mevastatin and pravastatin, but not simvastatin. This Penicillium rubens (strain ATCC 28089 / DSM 1075 / NRRL 1951 / Wisconsin 54-1255) (Penicillium chrysogenum) protein is Lovastatin esterase.